The chain runs to 77 residues: Large ribosomal subunit protein bL31 (77 aa).

The protein belongs to the bacterial ribosomal protein bL31 family. Type A subfamily. Part of the 50S ribosomal subunit.

Functionally, binds the 23S rRNA. This is Large ribosomal subunit protein bL31 from Microcystis aeruginosa (strain NIES-843 / IAM M-2473).